A 177-amino-acid polypeptide reads, in one-letter code: Adenine phosphoribosyltransferase (177 aa).

It belongs to the purine/pyrimidine phosphoribosyltransferase family. As to quaternary structure, homodimer.

Its subcellular location is the cytoplasm. The enzyme catalyses AMP + diphosphate = 5-phospho-alpha-D-ribose 1-diphosphate + adenine. It participates in purine metabolism; AMP biosynthesis via salvage pathway; AMP from adenine: step 1/1. In terms of biological role, catalyzes a salvage reaction resulting in the formation of AMP, that is energically less costly than de novo synthesis. The protein is Adenine phosphoribosyltransferase of Chlorobium phaeobacteroides (strain DSM 266 / SMG 266 / 2430).